Consider the following 339-residue polypeptide: Methyltransferase ptaI (339 aa).

Belongs to the methyltransferase superfamily.

Its pathway is secondary metabolite biosynthesis. Functionally, methyltransferase; part of the gene cluster that mediates the biosynthesis of pestheic acid, a diphenyl ether which is a biosynthetic precursor of the unique chloropupukeananes. The biosynthesis initiates from condensation of acetate and malonate units catalyzed by the non-reducing PKS ptaA. As the ptaA protein is TE/CLC domain-deficient, hydrolysis and Claisen cyclization of the polyketide could be catalyzed by ptaB containing a beta-lactamase domain. The ptaB protein might hydrolyze the thioester bond between the ACP of ptaA and the intermediate to release atrochrysone carboxylic acid, which is spontaneously dehydrated to form endocrocin anthrone. Endocrocin anthrone is then converted to endocrocin, catalyzed by the anthrone oxygenase ptaC. Spontaneous decarboxylation of endocrocin occurs to generate emodin. An O-methyltransferase (ptaH or ptaI) could methylate emodin to form physcion. PtaJ could then catalyze the oxidative cleavage of physcion, and rotation of the intermediate could then afford desmethylisosulochrin. PtaF, a putative NADH-dependent oxidoreductase, might also participate in the oxidative cleavage step. Desmethylisosulochrin is then transformed by another O-methyltransferase (ptaH or ptaI) to form isosulochrin. Chlorination of isosulochrin by ptaM in the cyclohexadienone B ring then produces chloroisosulochrin. PtaE is responsible for the oxidative coupling reactions of both benzophenones isosulouchrin and chloroisosulochrin to RES-1214-1 and pestheic acid respectively, regardless of chlorination. This Pestalotiopsis fici (strain W106-1 / CGMCC3.15140) protein is Methyltransferase ptaI.